Reading from the N-terminus, the 2148-residue chain is General transcription factor 3C polypeptide 1 (2148 aa).

Positions 473-487 (GEEAFLSDSESEEES) are enriched in acidic residues. Disordered stretches follow at residues 473–568 (GEEA…FDPH) and 587–609 (NPKEGGGSQKGGRHGSGQDKPHK). A compositionally biased stretch (basic residues) spans 491-502 (GKRRGRGSRGHS). A Glycyl lysine isopeptide (Lys-Gly) (interchain with G-Cter in SUMO2) cross-link involves residue Lys-533. Phosphoserine is present on Ser-666. Disordered stretches follow at residues 717–771 (STAN…EKMG) and 818–863 (TGEQ…SSWE). 2 stretches are compositionally biased toward basic and acidic residues: residues 759-770 (ESTRVKKTDEKM) and 825-835 (HSERKTGKQEP). Glycyl lysine isopeptide (Lys-Gly) (interchain with G-Cter in SUMO2) cross-links involve residues Lys-769 and Lys-832. A Phosphoserine modification is found at Ser-1062. Basic and acidic residues predominate over residues 1186–1195 (EHFELDREPT). 5 disordered regions span residues 1186–1238 (EHFE…KKLR), 1597–1627 (KSLGKDGGLDDDDEEEDLDEGSGTKRQSVEV), 1823–1881 (KASG…LPAK), 1893–1928 (SPRPGTEEQTEAQAQFAAPEDAGAEGPRQESQESVG), and 2127–2148 (PRPSHSCYQSSAQPSTGVATSR). Residue Thr-1195 is modified to Phosphothreonine. Over residues 1198 to 1214 (RNRKVRGGKSQKRKRLK) the composition is skewed to basic residues. Over residues 1228 to 1238 (EHPEAKSKKLR) the composition is skewed to basic and acidic residues. Positions 1605–1616 (LDDDDEEEDLDE) are enriched in acidic residues. Phosphoserine is present on residues Ser-1624, Ser-1853, and Ser-1893. Low complexity predominate over residues 1903–1912 (EAQAQFAAPE). Polar residues predominate over residues 2132–2148 (SCYQSSAQPSTGVATSR).

It belongs to the TFIIIC subunit 1 family. Part of the TFIIIC subcomplex TFIIIC2, consisting of six subunits, GTF3C1, GTF3C2, GTF3C3, GTF3C4, GTF3C5 and GTF3C6. Interacts with IGHMBP2. Interacts with MAF1.

The protein localises to the nucleus. Functionally, required for RNA polymerase III-mediated transcription. Component of TFIIIC that initiates transcription complex assembly on tRNA and is required for transcription of 5S rRNA and other stable nuclear and cytoplasmic RNAs. Binds to the box B promoter element. In Rattus norvegicus (Rat), this protein is General transcription factor 3C polypeptide 1 (Gtf3c1).